Reading from the N-terminus, the 732-residue chain is Myosin heavy chain kinase B (732 aa).

The 205-residue stretch at 124 to 328 (DPYTTTAQWT…ICQYLNLQSI (205 aa)) folds into the Alpha-type protein kinase domain. 298–303 (GIGNLG) provides a ligand contact to ATP. Positions 331–428 (KSEKSDCGTV…TNKERSKSKS (98 aa)) are disordered. Residues 356 to 394 (NNNNNNNNNNNNNNNNNNSNNNNNNNSSISKSLVEISSG) are compositionally biased toward low complexity. A compositionally biased stretch (basic and acidic residues) spans 395 to 404 (SKERNDRDSP). A compositionally biased stretch (polar residues) spans 405 to 419 (SRQLFVSNDGNTLNT). WD repeat units follow at residues 458–486 (KGYHVTSHLCICDNLLFTGCSDNSIRVYD), 500–528 (GHEGPVESICYNDQYLFSGSSDHSIKVWD), 540–568 (GHDKPVHTVLLNDKYLFSGSSDKTIKVWD), 580–608 (SHARAVKTLCISGQYLFSGSNDKTIKVWD), 620–648 (GHTKWVTTICILGTNLYSGSYDKTIRVWN), 660–688 (GHDRWVEHMVICDKLLFTASDDNTIKIWD), and 700–730 (GHNATVQCLAVWEDKKCVISCSHDQSIRVWG).

Belongs to the protein kinase superfamily. Alpha-type protein kinase family. ALPK subfamily.

The catalysed reaction is L-threonyl-[myosin heavy-chain] + ATP = O-phospho-L-threonyl-[myosin heavy-chain] + ADP + H(+). Functionally, catalyzes its autophosphorylation, which is needed for enzymatic activity and phosphorylates myosin II heavy chain at a threonine in the C-terminal tail region. This phosphorylation is critical in regulating the assembly and disassembly of myosin II filament. Participates in control of myosin localization. The chain is Myosin heavy chain kinase B (mhkB) from Dictyostelium discoideum (Social amoeba).